Reading from the N-terminus, the 111-residue chain is uncharacterized protein (111 aa).

Helical transmembrane passes span 7 to 29 (LYSSIMYVFFYIRIHTVFLRALY) and 49 to 71 (PSLLMLKIISTPLAFLIPNSINL).

It localises to the membrane. This is an uncharacterized protein from Saccharomyces cerevisiae (strain ATCC 204508 / S288c) (Baker's yeast).